The primary structure comprises 422 residues: Enolase (422 aa).

Gln-162 provides a ligand contact to (2R)-2-phosphoglycerate. The active-site Proton donor is Glu-204. Residues Asp-241, Glu-284, and Asp-311 each coordinate Mg(2+). (2R)-2-phosphoglycerate-binding residues include Lys-336, Arg-365, Ser-366, and Lys-387. The active-site Proton acceptor is the Lys-336.

It belongs to the enolase family. In terms of assembly, component of the RNA degradosome, a multiprotein complex involved in RNA processing and mRNA degradation. The cofactor is Mg(2+).

It localises to the cytoplasm. The protein localises to the secreted. The protein resides in the cell surface. It carries out the reaction (2R)-2-phosphoglycerate = phosphoenolpyruvate + H2O. Its pathway is carbohydrate degradation; glycolysis; pyruvate from D-glyceraldehyde 3-phosphate: step 4/5. Catalyzes the reversible conversion of 2-phosphoglycerate (2-PG) into phosphoenolpyruvate (PEP). It is essential for the degradation of carbohydrates via glycolysis. This chain is Enolase, found in Legionella pneumophila (strain Corby).